The primary structure comprises 202 residues: GTP cyclohydrolase 1 (202 aa).

Zn(2+) contacts are provided by Cys-90, His-93, and Cys-163.

It belongs to the GTP cyclohydrolase I family. As to quaternary structure, homomer.

It catalyses the reaction GTP + H2O = 7,8-dihydroneopterin 3'-triphosphate + formate + H(+). Its pathway is cofactor biosynthesis; 7,8-dihydroneopterin triphosphate biosynthesis; 7,8-dihydroneopterin triphosphate from GTP: step 1/1. The polypeptide is GTP cyclohydrolase 1 (Mycobacterium marinum (strain ATCC BAA-535 / M)).